The following is an 88-amino-acid chain: MARVTVQDAVEKIGNRFDLVLVAARRARQIQSGGKDALVPEENDKVTVIALREIEEGLITNQILDVRERQEQQAAEIQAVTAIAEGRR.

The protein belongs to the RNA polymerase subunit omega family. In terms of assembly, the RNAP catalytic core consists of 2 alpha, 1 beta, 1 beta' and 1 omega subunit. When a sigma factor is associated with the core the holoenzyme is formed, which can initiate transcription.

The catalysed reaction is RNA(n) + a ribonucleoside 5'-triphosphate = RNA(n+1) + diphosphate. Functionally, promotes RNA polymerase assembly. Latches the N- and C-terminal regions of the beta' subunit thereby facilitating its interaction with the beta and alpha subunits. This Yersinia pestis (strain Pestoides F) protein is DNA-directed RNA polymerase subunit omega.